A 217-amino-acid polypeptide reads, in one-letter code: L-lactate dehydrogenase B chain (217 aa).

An NAD(+)-binding site is contributed by Asn-22. Substrate-binding residues include Asn-22 and Arg-53. The active-site Proton acceptor is the His-77. Tyr-123 bears the Phosphotyrosine mark. Thr-132 contributes to the substrate binding site. N6-acetyllysine is present on Lys-212.

This sequence belongs to the LDH/MDH superfamily. LDH family. Homotetramer. Interacts with PTEN upstream reading frame protein MP31; the interaction leads to inhibition of mitochondrial lactate dehydrogenase activity, preventing conversion of lactate to pyruvate in mitochondria.

It is found in the cytoplasm. It localises to the mitochondrion inner membrane. The enzyme catalyses (S)-lactate + NAD(+) = pyruvate + NADH + H(+). The protein operates within fermentation; pyruvate fermentation to lactate; (S)-lactate from pyruvate: step 1/1. Functionally, interconverts simultaneously and stereospecifically pyruvate and lactate with concomitant interconversion of NADH and NAD(+). In Oryctolagus cuniculus (Rabbit), this protein is L-lactate dehydrogenase B chain (LDHB).